Consider the following 561-residue polypeptide: Formate--tetrahydrofolate ligase (561 aa).

66–73 (TPAGEGKT) contributes to the ATP binding site.

It belongs to the formate--tetrahydrofolate ligase family.

The catalysed reaction is (6S)-5,6,7,8-tetrahydrofolate + formate + ATP = (6R)-10-formyltetrahydrofolate + ADP + phosphate. It participates in one-carbon metabolism; tetrahydrofolate interconversion. The sequence is that of Formate--tetrahydrofolate ligase from Methylibium petroleiphilum (strain ATCC BAA-1232 / LMG 22953 / PM1).